A 355-amino-acid polypeptide reads, in one-letter code: Phosphoribosylformylglycinamidine cyclo-ligase (355 aa).

Belongs to the AIR synthase family.

The protein localises to the cytoplasm. It carries out the reaction 2-formamido-N(1)-(5-O-phospho-beta-D-ribosyl)acetamidine + ATP = 5-amino-1-(5-phospho-beta-D-ribosyl)imidazole + ADP + phosphate + H(+). It participates in purine metabolism; IMP biosynthesis via de novo pathway; 5-amino-1-(5-phospho-D-ribosyl)imidazole from N(2)-formyl-N(1)-(5-phospho-D-ribosyl)glycinamide: step 2/2. In Methylobacterium nodulans (strain LMG 21967 / CNCM I-2342 / ORS 2060), this protein is Phosphoribosylformylglycinamidine cyclo-ligase.